Here is a 310-residue protein sequence, read N- to C-terminus: Ribose-phosphate pyrophosphokinase (310 aa).

ATP contacts are provided by residues 33-35 and 92-93; these read DGE and RQ. The Mg(2+) site is built by histidine 127 and aspartate 166. The active site involves lysine 189. D-ribose 5-phosphate-binding positions include arginine 191, aspartate 215, and 219-223; that span reads DTAGT.

The protein belongs to the ribose-phosphate pyrophosphokinase family. Class I subfamily. Homohexamer. Mg(2+) serves as cofactor.

Its subcellular location is the cytoplasm. It catalyses the reaction D-ribose 5-phosphate + ATP = 5-phospho-alpha-D-ribose 1-diphosphate + AMP + H(+). It participates in metabolic intermediate biosynthesis; 5-phospho-alpha-D-ribose 1-diphosphate biosynthesis; 5-phospho-alpha-D-ribose 1-diphosphate from D-ribose 5-phosphate (route I): step 1/1. Its function is as follows. Involved in the biosynthesis of the central metabolite phospho-alpha-D-ribosyl-1-pyrophosphate (PRPP) via the transfer of pyrophosphoryl group from ATP to 1-hydroxyl of ribose-5-phosphate (Rib-5-P). This Bordetella parapertussis (strain 12822 / ATCC BAA-587 / NCTC 13253) protein is Ribose-phosphate pyrophosphokinase.